We begin with the raw amino-acid sequence, 296 residues long: Ribosomal RNA small subunit methyltransferase A (296 aa).

6 residues coordinate S-adenosyl-L-methionine: N31, L33, G58, E79, D111, and N136.

Belongs to the class I-like SAM-binding methyltransferase superfamily. rRNA adenine N(6)-methyltransferase family. RsmA subfamily.

It localises to the cytoplasm. The enzyme catalyses adenosine(1518)/adenosine(1519) in 16S rRNA + 4 S-adenosyl-L-methionine = N(6)-dimethyladenosine(1518)/N(6)-dimethyladenosine(1519) in 16S rRNA + 4 S-adenosyl-L-homocysteine + 4 H(+). Functionally, specifically dimethylates two adjacent adenosines (A1518 and A1519) in the loop of a conserved hairpin near the 3'-end of 16S rRNA in the 30S particle. May play a critical role in biogenesis of 30S subunits. The protein is Ribosomal RNA small subunit methyltransferase A of Lactobacillus johnsonii (strain CNCM I-12250 / La1 / NCC 533).